A 1299-amino-acid chain; its full sequence is Cilia- and flagella-associated protein 251 (1299 aa).

The segment at 1–351 (MSDTEENPLE…SQKPEDILAQ (351 aa)) is disordered. Acidic residues-rich tracts occupy residues 17 to 45 (EMEE…EEEE), 91 to 162 (EKEE…EEDA), and 176 to 189 (ESQE…EWVE). Basic and acidic residues predominate over residues 190-199 (KEEQREGEEV). The segment covering 212-228 (EEEGWEEEKSGEEEKSE) has biased composition (acidic residues). Over residues 229–257 (ESERSKERGGEEEGQEKEEAEHEGEREEG) the composition is skewed to basic and acidic residues. Acidic residues predominate over residues 269–280 (REEEEEEEDTET). 2 stretches are compositionally biased toward basic and acidic residues: residues 281 to 297 (TETK…EKQN) and 331 to 351 (NSMK…ILAQ). 14 WD repeats span residues 484–526 (PVHT…IWKW), 534–574 (ACTL…CWFE), 585–624 (VLTE…VWDI), 643–678 (PRKL…FYDH), 681–741 (SVVN…VYHM), 745–785 (GTKL…VWDF), 791–828 (LFSR…ILDA), 838–874 (PFKY…MVVV), 881–924 (WEYL…EYNL), 935–975 (LDVH…LFNA), 981–1027 (RKTL…ILPV), 1033–1071 (KTCA…QWKI), 1109–1149 (YFYY…FYPS), and 1169–1209 (GKLI…GYTN).

It is found in the cytoplasm. It localises to the cytoskeleton. The protein localises to the cilium axoneme. The protein resides in the cell projection. Its subcellular location is the cilium. It is found in the flagellum. Its function is as follows. Involved in spermatozoa motility. May also regulate cilium motility through its role in the assembly of the axonemal radial spokes. The chain is Cilia- and flagella-associated protein 251 from Mus musculus (Mouse).